Here is a 408-residue protein sequence, read N- to C-terminus: tRNA(Met) cytidine acetate ligase (408 aa).

ATP-binding positions include 7–20 (IVEY…HKYH), Gly-102, Asn-170, and 195–196 (RI).

The protein belongs to the TmcAL family.

It localises to the cytoplasm. The enzyme catalyses cytidine(34) in elongator tRNA(Met) + acetate + ATP = N(4)-acetylcytidine(34) in elongator tRNA(Met) + AMP + diphosphate. Functionally, catalyzes the formation of N(4)-acetylcytidine (ac(4)C) at the wobble position of elongator tRNA(Met), using acetate and ATP as substrates. First activates an acetate ion to form acetyladenylate (Ac-AMP) and then transfers the acetyl group to tRNA to form ac(4)C34. The chain is tRNA(Met) cytidine acetate ligase from Clostridium kluyveri (strain NBRC 12016).